The sequence spans 685 residues: Polyphosphate kinase (685 aa).

An ATP-binding site is contributed by Asn-45. The Mg(2+) site is built by Arg-372 and Arg-402. Residues 427 to 461 form the PLD phosphodiesterase 1 domain; sequence PGLKIHAKLFLISRKEGDDVVRYAHIGTGNFNEKT. The active-site Phosphohistidine intermediate is the His-432. ATP is bound by residues Tyr-465, Arg-561, and His-589. In terms of domain architecture, PLD phosphodiesterase 2 spans 584 to 614; sequence DRYLEHDRIYIFDNAGDKQVYLSSADWMTRN.

The protein belongs to the polyphosphate kinase 1 (PPK1) family. The cofactor is Mg(2+). In terms of processing, an intermediate of this reaction is the autophosphorylated ppk in which a phosphate is covalently linked to a histidine residue through a N-P bond.

It catalyses the reaction [phosphate](n) + ATP = [phosphate](n+1) + ADP. Its function is as follows. Catalyzes the reversible transfer of the terminal phosphate of ATP to form a long-chain polyphosphate (polyP). The polypeptide is Polyphosphate kinase (Klebsiella pneumoniae).